Consider the following 254-residue polypeptide: RING-H2 finger protein ATL28 (254 aa).

Residues 25 to 45 (VVLTGVLLFVIFAGFFSLFLW) form a helical membrane-spanning segment. Residues 103–145 (CAICLSEFSDEDTVRLITVCRHPFHSNCIDLWFELHKTCPVCR) form an RING-type; atypical zinc finger.

It belongs to the RING-type zinc finger family. ATL subfamily.

It localises to the membrane. The catalysed reaction is S-ubiquitinyl-[E2 ubiquitin-conjugating enzyme]-L-cysteine + [acceptor protein]-L-lysine = [E2 ubiquitin-conjugating enzyme]-L-cysteine + N(6)-ubiquitinyl-[acceptor protein]-L-lysine.. It functions in the pathway protein modification; protein ubiquitination. The polypeptide is RING-H2 finger protein ATL28 (ATL28) (Arabidopsis thaliana (Mouse-ear cress)).